We begin with the raw amino-acid sequence, 454 residues long: Exodeoxyribonuclease 7 large subunit (454 aa).

Residues 337-352 show a composition bias toward low complexity; the sequence is ANQRQQRASQRLRQQN. A disordered region spans residues 337-359; it reads ANQRQQRASQRLRQQNPQPRIHR.

The protein belongs to the XseA family. As to quaternary structure, heterooligomer composed of large and small subunits.

It localises to the cytoplasm. The enzyme catalyses Exonucleolytic cleavage in either 5'- to 3'- or 3'- to 5'-direction to yield nucleoside 5'-phosphates.. In terms of biological role, bidirectionally degrades single-stranded DNA into large acid-insoluble oligonucleotides, which are then degraded further into small acid-soluble oligonucleotides. The polypeptide is Exodeoxyribonuclease 7 large subunit (Salmonella arizonae (strain ATCC BAA-731 / CDC346-86 / RSK2980)).